The following is a 501-amino-acid chain: Calcium-dependent protein kinase 4 (501 aa).

Residues 25–283 enclose the Protein kinase domain; the sequence is YLLGKKLGQG…AHEALCHPWI (259 aa). Residues 31 to 39 and K54 contribute to the ATP site; that span reads LGQGQFGTT. Catalysis depends on D149, which acts as the Proton acceptor. Phosphoserine is present on S189. The autoinhibitory domain stretch occupies residues 289–319; the sequence is APDKPLDPAVLSRLKQFSQMNKIKKMALRVI. EF-hand domains lie at 326–361, 362–397, 398–433, and 437–467; these read EEIG…VGSE, LMES…INKM, EREE…FGLC, and LDDM…GDGV. Residues D339, D341, S343, T345, E350, D375, D377, S379, T381, E386, D411, D413, S415, Y417, E422, D445, D447, D449, K451, and E456 each contribute to the Ca(2+) site.

It belongs to the protein kinase superfamily. Ser/Thr protein kinase family. CDPK subfamily. Interacts with Di19.

It is found in the cytoplasm. The protein resides in the nucleus. The enzyme catalyses L-seryl-[protein] + ATP = O-phospho-L-seryl-[protein] + ADP + H(+). It catalyses the reaction L-threonyl-[protein] + ATP = O-phospho-L-threonyl-[protein] + ADP + H(+). With respect to regulation, activated by calcium. Autophosphorylation may play an important role in the regulation of the kinase activity. Functionally, may play a role in signal transduction pathways that involve calcium as a second messenger. Functions as a regulator of the calcium-mediated abscisic acid (ABA) signaling pathway. Phosphorylates ABA-responsive transcription factors ABF1 and ABF4 in vitro. Phosphorylates the nuclear zinc finger Di19 in vitro. This is Calcium-dependent protein kinase 4 (CPK4) from Arabidopsis thaliana (Mouse-ear cress).